The chain runs to 398 residues: 1-deoxy-D-xylulose 5-phosphate reductoisomerase (398 aa).

NADPH is bound by residues Thr-11, Gly-12, Ser-13, Ile-14, Arg-38, Asn-39, and Asn-125. Residue Lys-126 coordinates 1-deoxy-D-xylulose 5-phosphate. Glu-127 contributes to the NADPH binding site. A Mn(2+)-binding site is contributed by Asp-151. Residues Ser-152, Glu-153, Ser-179, and His-202 each coordinate 1-deoxy-D-xylulose 5-phosphate. Position 153 (Glu-153) interacts with Mn(2+). Gly-208 contacts NADPH. 4 residues coordinate 1-deoxy-D-xylulose 5-phosphate: Ser-215, Asn-220, Lys-221, and Glu-224. Glu-224 contacts Mn(2+).

It belongs to the DXR family. The cofactor is Mg(2+). Mn(2+) serves as cofactor.

It carries out the reaction 2-C-methyl-D-erythritol 4-phosphate + NADP(+) = 1-deoxy-D-xylulose 5-phosphate + NADPH + H(+). The protein operates within isoprenoid biosynthesis; isopentenyl diphosphate biosynthesis via DXP pathway; isopentenyl diphosphate from 1-deoxy-D-xylulose 5-phosphate: step 1/6. Its function is as follows. Catalyzes the NADPH-dependent rearrangement and reduction of 1-deoxy-D-xylulose-5-phosphate (DXP) to 2-C-methyl-D-erythritol 4-phosphate (MEP). This Burkholderia cenocepacia (strain HI2424) protein is 1-deoxy-D-xylulose 5-phosphate reductoisomerase.